A 319-amino-acid polypeptide reads, in one-letter code: Adenosine receptor A3 (319 aa).

Residues 1-15 are Extracellular-facing; it reads MEADNTTETDWLNIT. N-linked (GlcNAc...) asparagine glycosylation is found at asparagine 5 and asparagine 13. Residues 16 to 38 form a helical membrane-spanning segment; the sequence is YITMEAAIGLCAVVGNMLVIWVV. The Cytoplasmic segment spans residues 39–49; it reads KLNPTLRTTTV. Residues 50-73 traverse the membrane as a helical segment; that stretch reads YFIVSLALADIAVGVLVIPLAIAV. Topologically, residues 74 to 85 are extracellular; sequence SLQVKMHFYACL. An intrachain disulfide couples cysteine 84 to cysteine 167. A helical transmembrane segment spans residues 86–107; sequence FMSCVLLIFTHASIMSLLAIAV. Topologically, residues 108-127 are cytoplasmic; the sequence is HRYLRVKLTVRYRTVTTQRR. A helical membrane pass occupies residues 128–149; that stretch reads IWLFLGLCWLVSFLVGLTPMFG. At 150-178 the chain is on the extracellular side; it reads WNRKATLASSQNSSTLLCHFRSVVSLDYM. An N-linked (GlcNAc...) asparagine glycan is attached at asparagine 161. The helical transmembrane segment at 179 to 199 threads the bilayer; that stretch reads VFFSFITWILVPLVVMCIIYL. At 200–232 the chain is on the cytoplasmic side; that stretch reads DIFYIIRNKLSQNLTGFRETRAFYGREFKTAKS. The helical transmembrane segment at 233–256 threads the bilayer; that stretch reads LFLVLFLFALCWLPLSIINFVSYF. Topologically, residues 257–262 are extracellular; the sequence is DVKIPD. A helical transmembrane segment spans residues 263–285; sequence VAMCLGILLSHANSMMNPIVYAC. Residues 286–319 are Cytoplasmic-facing; it reads KIKKFKETYFLILRAVRLCQTSDSLDSNMEQTTE. Cysteine 304 carries the S-palmitoyl cysteine lipid modification.

Belongs to the G-protein coupled receptor 1 family. Phosphorylation on Thr-317 and Thr-318 may be crucial for rapid desensitization. Phosphorylation on Thr-317 may be necessary for phosphorylation on Thr-318 to occur.

It is found in the cell membrane. In terms of biological role, receptor for adenosine. The activity of this receptor is mediated by G proteins which inhibits adenylyl cyclase. This chain is Adenosine receptor A3 (Adora3), found in Mus musculus (Mouse).